A 262-amino-acid chain; its full sequence is Ribosome biogenesis GTPase A (262 aa).

The CP-type G domain occupies 12-157 (KRQIKDLLRL…ILDTPGILYK (146 aa)). Residues 54 to 57 (NKVD), 109 to 114 (NTGKST), and Gly153 each bind GTP.

It belongs to the TRAFAC class YlqF/YawG GTPase family. MTG1 subfamily.

It localises to the cytoplasm. Functionally, required for a late step of 50S ribosomal subunit assembly. Has GTPase activity. Binds to the 23S rRNA. The sequence is that of Ribosome biogenesis GTPase A from Thermotoga maritima (strain ATCC 43589 / DSM 3109 / JCM 10099 / NBRC 100826 / MSB8).